We begin with the raw amino-acid sequence, 2511 residues long: Fatty acid synthase (2511 aa).

Met1 bears the N-acetylmethionine mark. The 406-residue stretch at Met1 to Pro406 folds into the Ketosynthase family 3 (KS3) domain. Ser63 bears the Phosphoserine mark. Lys70 carries the post-translational modification N6-acetyllysine. Cys161 (for beta-ketoacyl synthase activity) is an active-site residue. A Phosphoserine modification is found at Ser207. The active-site For beta-ketoacyl synthase activity is His293. Lys298 is subject to N6-acetyllysine. The active-site For beta-ketoacyl synthase activity is His331. An acyl and malonyl transferases region spans residues Arg429–Pro817. Lys436 and Lys528 each carry N6-acetyllysine. The For malonyltransferase activity role is filled by Ser581. An acyl-CoA contacts are provided by residues Asp647 to Thr648 and Phe671. An N6-acetyllysine modification is found at Lys673. Residue Ser725 is modified to Phosphoserine. Arg773 contributes to the an acyl-CoA binding site. Positions His838 to Pro966 are N-terminal hotdog fold. The PKS/mFAS DH domain occupies His838 to Glu1108. Residue His878 is the Proton acceptor; for dehydratase activity of the active site. A C-terminal hotdog fold region spans residues Glu981–Glu1108. Lys992 carries the N6-acetyllysine modification. Asp1031 acts as the Proton donor; for dehydratase activity in catalysis. Phosphoserine is present on residues Ser1174 and Ser1411. An S-nitrosocysteine modification is found at Cys1471. Residues Ser1584 and Ser1594 each carry the phosphoserine modification. The segment at Asp1635 to Ala1863 is enoyl reductase. Leu1671–Ala1688 is an NADP(+) binding site. Lys1704 carries the N6-(pyridoxal phosphate)lysine; alternate modification. The residue at position 1704 (Lys1704) is an N6-acetyllysine; alternate. N6-acetyllysine is present on residues Lys1771 and Lys1847. The interval Val1864–Tyr2118 is beta-ketoacyl reductase. Ser1886 to Ala1901 contacts NADP(+). Position 1995 is an N6-acetyllysine (Lys1995). Cys2091 is subject to S-nitrosocysteine. Residues Arg2121 to Ser2198 enclose the Carrier domain. An O-(pantetheine 4'-phosphoryl)serine; alternate modification is found at Ser2156. At Ser2156 the chain carries Phosphoserine; alternate. Phosphoserine is present on Ser2198. Phosphothreonine is present on residues Thr2204 and Thr2215. The thioesterase stretch occupies residues Glu2207 to Gly2511. A Phosphoserine modification is found at Ser2236. The active-site For thioesterase activity is Ser2308. Lys2391 is modified (N6-acetyllysine). Residue Lys2449 forms a Glycyl lysine isopeptide (Lys-Gly) (interchain with G-Cter in SUMO2) linkage. The For thioesterase activity role is filled by His2481.

In terms of assembly, homodimer which is arranged in a head to tail fashion. Interacts with CEACAM1; this interaction is insulin and phosphorylation-dependent; reduces fatty-acid synthase activity. S-nitrosylation of Fatty acid synthase at cysteine residues Cys-1471 or Cys-2091 is important for the enzyme dimerization. In adipocytes, S-nitrosylation of Fatty acid synthase occurs under physiological conditions and gradually increases during adipogenesis. In terms of tissue distribution, ubiquitous. Prominent expression in brain, lung, liver and mammary gland.

It is found in the cytoplasm. It localises to the melanosome. It catalyses the reaction acetyl-CoA + n malonyl-CoA + 2n NADPH + 2n H(+) = a long-chain fatty acid + (n+1) CoA + n CO2 + 2n NADP(+).. The enzyme catalyses holo-[ACP] + acetyl-CoA = acetyl-[ACP] + CoA. It carries out the reaction holo-[ACP] + malonyl-CoA = malonyl-[ACP] + CoA. The catalysed reaction is a fatty acyl-[ACP] + malonyl-[ACP] + H(+) = a 3-oxoacyl-[ACP] + holo-[ACP] + CO2. It catalyses the reaction a (3R)-hydroxyacyl-[ACP] + NADP(+) = a 3-oxoacyl-[ACP] + NADPH + H(+). The enzyme catalyses a (3R)-hydroxyacyl-[ACP] = a (2E)-enoyl-[ACP] + H2O. It carries out the reaction a 2,3-saturated acyl-[ACP] + NADP(+) = a (2E)-enoyl-[ACP] + NADPH + H(+). The catalysed reaction is hexadecanoyl-[ACP] + H2O = hexadecanoate + holo-[ACP] + H(+). It catalyses the reaction acetyl-[ACP] + malonyl-[ACP] + H(+) = 3-oxobutanoyl-[ACP] + holo-[ACP] + CO2. The enzyme catalyses 3-oxobutanoyl-[ACP] + NADPH + H(+) = (3R)-hydroxybutanoyl-[ACP] + NADP(+). It carries out the reaction (3R)-hydroxybutanoyl-[ACP] = (2E)-butenoyl-[ACP] + H2O. The catalysed reaction is (2E)-butenoyl-[ACP] + NADPH + H(+) = butanoyl-[ACP] + NADP(+). It catalyses the reaction butanoyl-[ACP] + malonyl-[ACP] + H(+) = 3-oxohexanoyl-[ACP] + holo-[ACP] + CO2. The enzyme catalyses 3-oxohexanoyl-[ACP] + NADPH + H(+) = (3R)-hydroxyhexanoyl-[ACP] + NADP(+). It carries out the reaction (3R)-hydroxyhexanoyl-[ACP] = (2E)-hexenoyl-[ACP] + H2O. The catalysed reaction is (2E)-hexenoyl-[ACP] + NADPH + H(+) = hexanoyl-[ACP] + NADP(+). It catalyses the reaction hexanoyl-[ACP] + malonyl-[ACP] + H(+) = 3-oxooctanoyl-[ACP] + holo-[ACP] + CO2. The enzyme catalyses 3-oxooctanoyl-[ACP] + NADPH + H(+) = (3R)-hydroxyoctanoyl-[ACP] + NADP(+). It carries out the reaction (3R)-hydroxyoctanoyl-[ACP] = (2E)-octenoyl-[ACP] + H2O. The catalysed reaction is (2E)-octenoyl-[ACP] + NADPH + H(+) = octanoyl-[ACP] + NADP(+). It catalyses the reaction octanoyl-[ACP] + malonyl-[ACP] + H(+) = 3-oxodecanoyl-[ACP] + holo-[ACP] + CO2. The enzyme catalyses 3-oxodecanoyl-[ACP] + NADPH + H(+) = (3R)-hydroxydecanoyl-[ACP] + NADP(+). It carries out the reaction (3R)-hydroxydecanoyl-[ACP] = (2E)-decenoyl-[ACP] + H2O. The catalysed reaction is (2E)-decenoyl-[ACP] + NADPH + H(+) = decanoyl-[ACP] + NADP(+). It catalyses the reaction decanoyl-[ACP] + malonyl-[ACP] + H(+) = 3-oxododecanoyl-[ACP] + holo-[ACP] + CO2. The enzyme catalyses 3-oxododecanoyl-[ACP] + NADPH + H(+) = (3R)-hydroxydodecanoyl-[ACP] + NADP(+). It carries out the reaction (3R)-hydroxydodecanoyl-[ACP] = (2E)-dodecenoyl-[ACP] + H2O. The catalysed reaction is (2E)-dodecenoyl-[ACP] + NADPH + H(+) = dodecanoyl-[ACP] + NADP(+). It catalyses the reaction dodecanoyl-[ACP] + malonyl-[ACP] + H(+) = 3-oxotetradecanoyl-[ACP] + holo-[ACP] + CO2. The enzyme catalyses 3-oxotetradecanoyl-[ACP] + NADPH + H(+) = (3R)-hydroxytetradecanoyl-[ACP] + NADP(+). It carries out the reaction (3R)-hydroxytetradecanoyl-[ACP] = (2E)-tetradecenoyl-[ACP] + H2O. The catalysed reaction is (2E)-tetradecenoyl-[ACP] + NADPH + H(+) = tetradecanoyl-[ACP] + NADP(+). It catalyses the reaction tetradecanoyl-[ACP] + malonyl-[ACP] + H(+) = 3-oxohexadecanoyl-[ACP] + holo-[ACP] + CO2. The enzyme catalyses 3-oxohexadecanoyl-[ACP] + NADPH + H(+) = (3R)-hydroxyhexadecanoyl-[ACP] + NADP(+). It carries out the reaction (3R)-hydroxyhexadecanoyl-[ACP] = (2E)-hexadecenoyl-[ACP] + H2O. The catalysed reaction is (2E)-hexadecenoyl-[ACP] + NADPH + H(+) = hexadecanoyl-[ACP] + NADP(+). It catalyses the reaction hexadecanoyl-[ACP] + malonyl-[ACP] + H(+) = 3-oxooctadecanoyl-[ACP] + holo-[ACP] + CO2. The enzyme catalyses 3-oxooctadecanoyl-[ACP] + NADPH + H(+) = (3R)-hydroxyoctadecanoyl-[ACP] + NADP(+). It carries out the reaction (3R)-hydroxyoctadecanoyl-[ACP] = (2E)-octadecenoyl-[ACP] + H2O. The catalysed reaction is (2E)-octadecenoyl-[ACP] + NADPH + H(+) = octadecanoyl-[ACP] + NADP(+). It catalyses the reaction tetradecanoyl-[ACP] + H2O = tetradecanoate + holo-[ACP] + H(+). The enzyme catalyses octadecanoyl-[ACP] + H2O = octadecanoate + holo-[ACP] + H(+). The protein operates within lipid metabolism; fatty acid biosynthesis. Its activity is regulated as follows. Activated by S-nitrosylation which promotes enzyme dimerization. Cerulenin, a potent non-competitive pharmacological inhibitor of FAS, binds covalently to the active site of the condensing enzyme region, inactivating a key enzyme step in fatty acid synthesis. Functionally, fatty acid synthetase is a multifunctional enzyme that catalyzes the de novo biosynthesis of long-chain saturated fatty acids starting from acetyl-CoA and malonyl-CoA in the presence of NADPH. This multifunctional protein contains 7 catalytic activities and a site for the binding of the prosthetic group 4'-phosphopantetheine of the acyl carrier protein ([ACP]) domain. (Microbial infection) Fatty acid synthetase activity is required for SARS coronavirus-2/SARS-CoV-2 replication. The chain is Fatty acid synthase (FASN) from Homo sapiens (Human).